The following is a 182-amino-acid chain: DAEQHGEVALKDANAKLQDLKAALQQAKEDLARLLKEYQELMNVKLALDIEIATYRTLLEGEECRMSGECQSSVSIEMVHNTTSSSSGGSGALGGGAGGRGGLGSGGLGSGSLGSGRLGSGGRGSRASRGNLALDSSSGGGSAVRGSVSNSGGSCAVSGVGGRGSVRVTQSSSQSQRSHHKL.

One can recognise an IF rod domain in the interval 1–66 (DAEQHGEVAL…TLLEGEECRM (66 aa)). Residues 1-66 (DAEQHGEVAL…TLLEGEECRM (66 aa)) are coil 2B. The H2 subdomain stretch occupies residues 67-86 (SGECQSSVSIEMVHNTTSSS). A tail region spans residues 67–182 (SGECQSSVSI…SQSQRSHHKL (116 aa)). Residues 87–162 (SGGSGALGGG…GSCAVSGVGG (76 aa)) form a V2 subdomain region. Residues 104–124 (GSGGLGSGSLGSGRLGSGGRG) are compositionally biased toward gly residues. Residues 104-182 (GSGGLGSGSL…SQSQRSHHKL (79 aa)) form a disordered region. Low complexity-rich tracts occupy residues 144-158 (VRGS…CAVS) and 165-176 (SVRVTQSSSQSQ). Residues 163 to 182 (RGSVRVTQSSSQSQRSHHKL) are E2 subdomain.

This sequence belongs to the intermediate filament family. In terms of assembly, heterotetramer of two type I and two type II keratins.

The protein is Keratin, type II cytoskeletal 68 kDa, component IA of Bos taurus (Bovine).